A 387-amino-acid chain; its full sequence is 1-deoxy-D-xylulose 5-phosphate reductoisomerase (387 aa).

Thr-11, Gly-12, Ser-13, Ile-14, Gly-37, Arg-38, Gln-39, and Asn-127 together coordinate NADPH. A 1-deoxy-D-xylulose 5-phosphate-binding site is contributed by Lys-128. Glu-129 is a binding site for NADPH. Asp-153 serves as a coordination point for Mn(2+). 1-deoxy-D-xylulose 5-phosphate is bound by residues Ser-154, Glu-155, Ser-179, and His-200. Residue Glu-155 participates in Mn(2+) binding. Gly-206 serves as a coordination point for NADPH. The 1-deoxy-D-xylulose 5-phosphate site is built by Ser-213, Asn-218, Lys-219, and Glu-222. A Mn(2+)-binding site is contributed by Glu-222.

Belongs to the DXR family. Mg(2+) is required as a cofactor. Requires Mn(2+) as cofactor.

It carries out the reaction 2-C-methyl-D-erythritol 4-phosphate + NADP(+) = 1-deoxy-D-xylulose 5-phosphate + NADPH + H(+). Its pathway is isoprenoid biosynthesis; isopentenyl diphosphate biosynthesis via DXP pathway; isopentenyl diphosphate from 1-deoxy-D-xylulose 5-phosphate: step 1/6. Functionally, catalyzes the NADPH-dependent rearrangement and reduction of 1-deoxy-D-xylulose-5-phosphate (DXP) to 2-C-methyl-D-erythritol 4-phosphate (MEP). In Symbiobacterium thermophilum (strain DSM 24528 / JCM 14929 / IAM 14863 / T), this protein is 1-deoxy-D-xylulose 5-phosphate reductoisomerase.